The following is an 848-amino-acid chain: Adenylate cyclase (848 aa).

The tract at residues 1–535 is catalytic; that stretch reads MYLYIETLKQ…DVSHHFPLRL (535 aa). The segment at 541-848 is regulatory; that stretch reads KALYSPCEIR…DTPLLQQYFS (308 aa). At His-609 the chain carries Phosphohistidine; by CRR.

Belongs to the adenylyl cyclase class-1 family.

The protein localises to the cytoplasm. It catalyses the reaction ATP = 3',5'-cyclic AMP + diphosphate. The protein is Adenylate cyclase (cyaA) of Shigella flexneri.